The following is a 1213-amino-acid chain: SWI/SNF complex subunit SMARCC2 (1213 aa).

Residues 1-274 (MAVRKKDGGP…PVSRRKKISA (274 aa)) form a marR-like, BRCT and chromo domains module region. Residues 10 to 136 (PNVKYYEAAD…IEKSLVQNNC (127 aa)) form the MarR-like domain. Residues 140–183 (PNIFLCPEIEPKLLGKLKDIVKRHQGTISEDKSNASHVVYPVPG) form the BRCT; N-terminus domain. The region spanning 189–217 (EWVRPVMKRDKQVLLHWGYYPDSYDTWIP) is the Chromo domain. In terms of domain architecture, BRCT; C-terminus spans 233-257 (KPRKVHAKWILDTDTFNEWMNEEDY). The segment at 256–413 (DYEVSDDKSP…GEQTKNPDLH (158 aa)) is disordered. Residues 275–284 (KTLTDEVNSP) show a composition bias toward polar residues. Phosphoserine occurs at positions 283, 286, 302, 304, and 306. Lysine 312 is modified (N6-(ADP-ribosyl)lysine). N6-acetyllysine is present on lysine 326. Over residues 331–344 (HREEEQEDLTKDMD) the composition is skewed to basic and acidic residues. A phosphoserine mark is found at serine 347 and serine 387. A compositionally biased stretch (acidic residues) spans 379–398 (DLDEQDDESMETTGKDEDEN). Residues 424–521 (IIIPSYAAWF…YQVDAESRPT (98 aa)) form the SWIRM domain. Residues lysine 564, lysine 566, lysine 568, and lysine 592 each participate in a glycyl lysine isopeptide (Lys-Gly) (interchain with G-Cter in SUMO2) cross-link. The 52-residue stretch at 596–647 (SATREWTEQETLLLLEALEMYKDDWNKVSEHVGSRTQDECILHFLRLPIEDP) folds into the SANT domain. Lysine 704 is covalently cross-linked (Glycyl lysine isopeptide (Lys-Gly) (interchain with G-Cter in SUMO2)). Positions 724-848 (KVTGKADPAF…AEPEGERKTK (125 aa)) are disordered. Residues 747 to 777 (EPERIEESGTEEARPEGQAADEKKEPKEPRE) show a composition bias toward basic and acidic residues. Lysine 787 participates in a covalent cross-link: Glycyl lysine isopeptide (Lys-Gly) (interchain with G-Cter in SUMO2). Residues 788 to 848 (EEISEVPKKD…AEPEGERKTK (61 aa)) are compositionally biased toward basic and acidic residues. Serine 813 is subject to Phosphoserine. Residue lysine 848 forms a Glycyl lysine isopeptide (Lys-Gly) (interchain with G-Cter in SUMO2) linkage. Residues 907–934 (EELETIMDREREALEYQRQQLLADRQAF) adopt a coiled-coil conformation. Disordered regions lie at residues 947-1073 (RQQH…HPGV) and 1181-1213 (LPSASPLPDPGTPLPPDPTAPSPGTVTPVPPPQ). Over residues 949–962 (QHFQQMHQQQQQQP) the composition is skewed to low complexity. Pro residues predominate over residues 963 to 974 (PTLPPGSQPIPP). Positions 975 to 1033 (TGAAGPPTVHGLAVPPAAVASAPPGSGAPPGSLGPSEQIGQAGTTAGPQQPQQAGAPQP) are enriched in low complexity. Composition is skewed to pro residues over residues 1034–1060 (GAVPPGVPPPGPHGPSPFPNQPTPPSM) and 1185–1201 (SPLPDPGTPLPPDPTAP).

The protein belongs to the SMARCC family. In terms of assembly, component of the multiprotein chromatin-remodeling complexes SWI/SNF: SWI/SNF-A (BAF), SWI/SNF-B (PBAF) and related complexes. The canonical complex contains a catalytic subunit (either SMARCA4/BRG1/BAF190A or SMARCA2/BRM/BAF190B) and at least SMARCE1, ACTL6A/BAF53, SMARCC1/BAF155, SMARCC2/BAF170, and SMARCB1/SNF5/BAF47. Other subunits specific to each of the complexes may also be present permitting several possible combinations developmentally and tissue specific. Component of the BAF complex, which includes at least actin (ACTB), ARID1A/BAF250A, ARID1B/BAF250B, SMARCA2/BRM, SMARCA4/BRG1, ACTL6A/BAF53, ACTL6B/BAF53B, SMARCE1/BAF57, SMARCC1/BAF155, SMARCC2/BAF170, SMARCB1/SNF5/INI1, and one or more SMARCD1/BAF60A, SMARCD2/BAF60B, or SMARCD3/BAF60C. In muscle cells, the BAF complex also contains DPF3. Component of neural progenitors-specific chromatin remodeling complex (npBAF complex) composed of at least, ARID1A/BAF250A or ARID1B/BAF250B, SMARCD1/BAF60A, SMARCD3/BAF60C, SMARCA2/BRM/BAF190B, SMARCA4/BRG1/BAF190A, SMARCB1/BAF47, SMARCC1/BAF155, SMARCE1/BAF57, SMARCC2/BAF170, PHF10/BAF45A, ACTL6A/BAF53A and actin. Component of neuron-specific chromatin remodeling complex (nBAF complex) composed of at least, ARID1A/BAF250A or ARID1B/BAF250B, SMARCD1/BAF60A, SMARCD3/BAF60C, SMARCA2/BRM/BAF190B, SMARCA4/BRG1/BAF190A, SMARCB1/BAF47, SMARCC1/BAF155, SMARCE1/BAF57, SMARCC2/BAF170, DPF1/BAF45B, DPF3/BAF45C, ACTL6B/BAF53B and actin. Component of the SWI/SNF-B (PBAF) chromatin remodeling complex, at least composed of SMARCA4/BRG1, SMARCB1/BAF47/SNF5, ACTL6A/BAF53A or ACTL6B/BAF53B, SMARCE1/BAF57, SMARCD1/BAF60A, SMARCD2/BAF60B, perhaps SMARCD3/BAF60C, SMARCC1/BAF155, SMARCC2/BAF170, PBRM1/BAF180, ARID2/BAF200 and actin. May also interact with the SIN3A histone deacetylase transcription repressor complex in conjunction with SMARCA2 and SMARCA4. Interacts with SMARD1. Interacts with KDM6B. Interaction with RCOR1. Interacts with DPF2. Interacts with ERCC6. Interacts with FOS. In terms of processing, mono-ADP-ribosylation at Lys-312 by SIRT6 promotes recruitment to the enhancer region of the Heme oxygenase-1 (HO-1) locus, leading to transcription activation of the locus.

Its subcellular location is the nucleus. Involved in transcriptional activation and repression of select genes by chromatin remodeling (alteration of DNA-nucleosome topology). Component of SWI/SNF chromatin remodeling complexes that carry out key enzymatic activities, changing chromatin structure by altering DNA-histone contacts within a nucleosome in an ATP-dependent manner. Can stimulate the ATPase activity of the catalytic subunit of these complexes. May be required for CoREST dependent repression of neuronal specific gene promoters in non-neuronal cells. Belongs to the neural progenitors-specific chromatin remodeling complex (npBAF complex) and the neuron-specific chromatin remodeling complex (nBAF complex). During neural development a switch from a stem/progenitor to a postmitotic chromatin remodeling mechanism occurs as neurons exit the cell cycle and become committed to their adult state. The transition from proliferating neural stem/progenitor cells to postmitotic neurons requires a switch in subunit composition of the npBAF and nBAF complexes. As neural progenitors exit mitosis and differentiate into neurons, npBAF complexes which contain ACTL6A/BAF53A and PHF10/BAF45A, are exchanged for homologous alternative ACTL6B/BAF53B and DPF1/BAF45B or DPF3/BAF45C subunits in neuron-specific complexes (nBAF). The npBAF complex is essential for the self-renewal/proliferative capacity of the multipotent neural stem cells. The nBAF complex along with CREST plays a role regulating the activity of genes essential for dendrite growth. Critical regulator of myeloid differentiation, controlling granulocytopoiesis and the expression of genes involved in neutrophil granule formation. The protein is SWI/SNF complex subunit SMARCC2 (Smarcc2) of Mus musculus (Mouse).